The sequence spans 202 residues: ATP-dependent Clp protease proteolytic subunit (202 aa).

Residue Ser-98 is the Nucleophile of the active site. The active site involves His-123.

This sequence belongs to the peptidase S14 family. Fourteen ClpP subunits assemble into 2 heptameric rings which stack back to back to give a disk-like structure with a central cavity, resembling the structure of eukaryotic proteasomes.

Its subcellular location is the cytoplasm. It catalyses the reaction Hydrolysis of proteins to small peptides in the presence of ATP and magnesium. alpha-casein is the usual test substrate. In the absence of ATP, only oligopeptides shorter than five residues are hydrolyzed (such as succinyl-Leu-Tyr-|-NHMec, and Leu-Tyr-Leu-|-Tyr-Trp, in which cleavage of the -Tyr-|-Leu- and -Tyr-|-Trp bonds also occurs).. Its function is as follows. Cleaves peptides in various proteins in a process that requires ATP hydrolysis. Has a chymotrypsin-like activity. Plays a major role in the degradation of misfolded proteins. The chain is ATP-dependent Clp protease proteolytic subunit from Syntrophobacter fumaroxidans (strain DSM 10017 / MPOB).